Here is an 89-residue protein sequence, read N- to C-terminus: UPF0147 protein STK_04605 (89 aa).

Belongs to the UPF0147 family.

The polypeptide is UPF0147 protein STK_04605 (Sulfurisphaera tokodaii (strain DSM 16993 / JCM 10545 / NBRC 100140 / 7) (Sulfolobus tokodaii)).